We begin with the raw amino-acid sequence, 123 residues long: Beta-2-microglobulin (123 aa).

The N-terminal stretch at 1–21 is a signal peptide; the sequence is MSRLFLFALLGHLCFLPYLDA. The Ig-like C1-type domain maps to 29-118; it reads PRVQVYSRYP…STLNEPKVVK (90 aa). A disulfide bridge connects residues Cys-49 and Cys-104.

The protein belongs to the beta-2-microglobulin family. Heterodimer of an alpha chain and a beta chain. Beta-2-microglobulin is the beta-chain of major histocompatibility complex class I molecules.

The protein localises to the secreted. In terms of biological role, component of the class I major histocompatibility complex (MHC). Involved in the presentation of peptide antigens to the immune system. The polypeptide is Beta-2-microglobulin (B2M) (Monodelphis domestica (Gray short-tailed opossum)).